The following is a 37-amino-acid chain: Large ribosomal subunit protein bL36c (37 aa).

Belongs to the bacterial ribosomal protein bL36 family.

Its subcellular location is the plastid. The sequence is that of Large ribosomal subunit protein bL36c from Aneura mirabilis (Parasitic liverwort).